Here is an 86-residue protein sequence, read N- to C-terminus: Protein GOLVEN 1 (86 aa).

The N-terminal stretch at 1 to 29 (MSCSLRSGLVIVFCFILLLLSSNVGCASA) is a signal peptide. The propeptide occupies 30-70 (ARRLRSHKHHHHKVASLDVFNGGERRRALGGVETGEEVVVM). The residue at position 72 (Tyr72) is a Sulfotyrosine. Pro80 is subject to Hydroxyproline. Positions 84 to 86 (EKS) are excised as a propeptide.

This sequence belongs to the RGF family. Binds to LRR receptor-like serine/threonine-protein kinases to trigger their dimerization with SERK proteins and subsequent signaling. As to expression, expressed in stems, hypocotyls, cotyledons, leaves, flowers, shoot apex, siliques, stamens and petals.

Its subcellular location is the endoplasmic reticulum. The protein resides in the secreted. In terms of biological role, signaling peptide (root growth factor) that regulates the pattern of root growth and lateral root development by modulating the length and the number of cortical cells in the root apical meristem (RAM), and the anticlinal asymmetric cell divisions in lateral root initiation cells. Also involved in the regulation of hypocotyl bending and root gravitropism in a PIN2-traffic dependent manner, thus influencing the formation of auxin gradients. Maintains the postembryonic root stem cell niche. This is Protein GOLVEN 1 from Arabidopsis thaliana (Mouse-ear cress).